We begin with the raw amino-acid sequence, 42 residues long: Photosystem I reaction center subunit IX (42 aa).

Residues 7-27 (YLSTAPVLSALWFAILAGLLI) form a helical membrane-spanning segment.

The protein belongs to the PsaJ family.

It localises to the plastid. The protein resides in the chloroplast thylakoid membrane. Functionally, may help in the organization of the PsaE and PsaF subunits. This Chlorokybus atmophyticus (Soil alga) protein is Photosystem I reaction center subunit IX.